The following is a 385-amino-acid chain: DNA replication and repair protein RecF (385 aa).

Residue 30–37 participates in ATP binding; the sequence is GPNGFGKT.

It belongs to the RecF family.

Its subcellular location is the cytoplasm. The RecF protein is involved in DNA metabolism; it is required for DNA replication and normal SOS inducibility. RecF binds preferentially to single-stranded, linear DNA. It also seems to bind ATP. This is DNA replication and repair protein RecF from Mycobacterium marinum (strain ATCC BAA-535 / M).